A 328-amino-acid polypeptide reads, in one-letter code: Tryptophan--tRNA ligase (328 aa).

ATP-binding positions include 8-10 (RPT) and 16-17 (GH). The 'HIGH' region signature appears at 9–17 (PTGKLHIGH). L-tryptophan is bound at residue Asp136. Residues 148–150 (GED), Leu186, and 193–197 (KMSKS) contribute to the ATP site. A 'KMSKS' region motif is present at residues 193-197 (KMSKS).

Belongs to the class-I aminoacyl-tRNA synthetase family. As to quaternary structure, homodimer.

It localises to the cytoplasm. The enzyme catalyses tRNA(Trp) + L-tryptophan + ATP = L-tryptophyl-tRNA(Trp) + AMP + diphosphate + H(+). In terms of biological role, catalyzes the attachment of tryptophan to tRNA(Trp). This Thermotoga maritima (strain ATCC 43589 / DSM 3109 / JCM 10099 / NBRC 100826 / MSB8) protein is Tryptophan--tRNA ligase.